Consider the following 339-residue polypeptide: Sulfate/thiosulfate import ATP-binding protein CysA (339 aa).

The 235-residue stretch at 3–237 (IAIRSVEKQF…PETAFVCGFV (235 aa)) folds into the ABC transporter domain. 35–42 (GPSGSGKT) provides a ligand contact to ATP.

This sequence belongs to the ABC transporter superfamily. Sulfate/tungstate importer (TC 3.A.1.6) family. As to quaternary structure, the complex is composed of two ATP-binding proteins (CysA), two transmembrane proteins (CysT and CysW) and a solute-binding protein (CysP).

The protein resides in the cell inner membrane. The catalysed reaction is sulfate(out) + ATP + H2O = sulfate(in) + ADP + phosphate + H(+). The enzyme catalyses thiosulfate(out) + ATP + H2O = thiosulfate(in) + ADP + phosphate + H(+). Part of the ABC transporter complex CysAWTP involved in sulfate/thiosulfate import. Responsible for energy coupling to the transport system. The chain is Sulfate/thiosulfate import ATP-binding protein CysA from Caulobacter vibrioides (strain ATCC 19089 / CIP 103742 / CB 15) (Caulobacter crescentus).